The primary structure comprises 309 residues: Dihydroorotate dehydrogenase B (NAD(+)), catalytic subunit (309 aa).

Residues S21 and 45-46 (KA) contribute to the FMN site. Residues K45 and 69 to 73 (NAIGL) each bind substrate. Residues N99 and N127 each coordinate FMN. N127 serves as a coordination point for substrate. The active-site Nucleophile is C130. K165 and I191 together coordinate FMN. Substrate is bound at residue 192-193 (NT). FMN-binding positions include G217, 243–244 (GG), and 265–266 (GT).

It belongs to the dihydroorotate dehydrogenase family. Type 1 subfamily. In terms of assembly, heterotetramer of 2 PyrK and 2 PyrD type B subunits. FMN serves as cofactor.

Its subcellular location is the cytoplasm. The enzyme catalyses (S)-dihydroorotate + NAD(+) = orotate + NADH + H(+). Its pathway is pyrimidine metabolism; UMP biosynthesis via de novo pathway; orotate from (S)-dihydroorotate (NAD(+) route): step 1/1. Catalyzes the conversion of dihydroorotate to orotate with NAD(+) as electron acceptor. The chain is Dihydroorotate dehydrogenase B (NAD(+)), catalytic subunit (pyrD) from Bacillus cereus (strain AH187).